Reading from the N-terminus, the 216-residue chain is uncharacterized protein (216 aa).

S-adenosyl-L-methionine is bound by residues Gly-56 and Glu-77.

This sequence belongs to the methyltransferase superfamily. YrrT family.

Its function is as follows. Could be a S-adenosyl-L-methionine-dependent methyltransferase. This is an uncharacterized protein from Alkaliphilus oremlandii (strain OhILAs) (Clostridium oremlandii (strain OhILAs)).